A 138-amino-acid chain; its full sequence is ATP synthase epsilon chain (138 aa).

It belongs to the ATPase epsilon chain family. F-type ATPases have 2 components, CF(1) - the catalytic core - and CF(0) - the membrane proton channel. CF(1) has five subunits: alpha(3), beta(3), gamma(1), delta(1), epsilon(1). CF(0) has three main subunits: a, b and c.

The protein localises to the cell membrane. Functionally, produces ATP from ADP in the presence of a proton gradient across the membrane. This chain is ATP synthase epsilon chain, found in Streptococcus uberis (strain ATCC BAA-854 / 0140J).